We begin with the raw amino-acid sequence, 591 residues long: Paxillin (591 aa).

Position 1 is an N-acetylmethionine (methionine 1). Residues 3-15 (DLDALLADLESTT) carry the LD motif 1 motif. The interval 17-138 (HISKRPVFLS…SSPTVMSTSL (122 aa)) is disordered. At tyrosine 31 the chain carries Phosphotyrosine; by PTK6. The span at 45 to 54 (VPPPVPPPPS) shows a compositional bias: pro residues. Residues 69–101 (WQPSGSRFIHQQPQSSSPVYGSSAKTSSVSNPQ) show a composition bias toward polar residues. Residues serine 83 and serine 85 each carry the phosphoserine modification. Tyrosine 88 bears the Phosphotyrosine mark. Residue serine 106 is modified to Phosphoserine. Tyrosine 118 carries the post-translational modification Phosphotyrosine; by PTK6. 3 positions are modified to phosphoserine: serine 119, serine 126, and serine 130. Positions 121–137 (PNKQKSAESSPTVMSTS) are enriched in polar residues. Threonine 132 carries the phosphothreonine modification. A phosphoserine mark is found at serine 137, serine 140, and serine 143. Positions 144-156 (ELDRLLLELNAVQ) match the LD motif 2 motif. The disordered stretch occupies residues 156–213 (QHNPPGFPADEANSGPPLPGALSPHYGVPETNSPLGGKAGPLTKEKPKRNGGRGLEDV). Residue tyrosine 181 is modified to Phosphotyrosine. The LD motif 3 motif lies at 216–228 (SVESLLDELESSV). Serine 230 is modified (phosphoserine). Residues 237–260 (VNQGEMSSPQRVTSTQQQTRISAS) form a disordered region. A Phosphoserine; by CDK5 modification is found at serine 244. Residues serine 250, serine 258, serine 261, and serine 272 each carry the phosphoserine modification. Positions 265–276 (ELDELMASLSDF) match the LD motif 4 motif. Residues 289-300 (RCWAADWPRDGG) are compositionally biased toward basic and acidic residues. The segment at 289-335 (RCWAADWPRDGGRSSPGGQDEGGFMAQGKTGSSSPPGGPPKPGSQLD) is disordered. Serine 303, serine 322, serine 332, and serine 340 each carry phosphoserine. An LD motif 5 motif is present at residues 333–345 (QLDSMLGSLQSDL). 4 LIM zinc-binding domains span residues 356–415 (GVCG…LFSP), 416–473 (RCYY…DMFA), 474–533 (PKCG…RRGS), and 534–591 (LCSG…KLFC). Serine 533 is modified (phosphoserine).

This sequence belongs to the paxillin family. In terms of assembly, binds to vinculin and to the SH3 domain of SRC. Interacts with GIT1, NUDT16L1/SDOS, PARVA, PARVB, SORBS1 and TGFB1I1. Component of cytoplasmic complexes, which also contain GIT1, ARHGEF6 and PAK1. Binds ASAP2. Interacts with RNF5 and PDCD10. Interacts with NEK3 and this interaction is prolactin-dependent. Interacts with PTK2/FAK1 and PTK2B/PYK2. Interacts with PTK6. Interacts with CD36. Interacts (via cytoplasmic domain) with CEACAM1; the interaction is phosphotyrosyl-dependent. Interacts with PXN; this complex stabilizes actin dynamics. Interacts with TRIM15. Interacts with PAK4; PAK4 acts as a scaffold to suppport PAXI phosphorylation at Ser-272. Post-translationally, phosphorylated by MAPK1/ERK2. Phosphorylated on tyrosine residues during integrin-mediated cell adhesion, embryonic development, fibroblast transformation and following stimulation of cells by mitogens. Phosphorylation at Ser-244 by CDK5 reduces its interaction with PTK2/FAK1 in matrix-cell focal adhesions (MCFA) during oligodendrocytes (OLs) differentiation. Phosphorylation at Tyr-31 and Tyr-118 by PTK6 promote the activation of RAC1 via CRK/CrKII, thereby promoting migration and invasion. Phosphorylation at Ser-250 by SLK is required for PXN redistribution and cell motility. Phosphorylation at Ser-272 promotes focal adhesion disassembly during cell migration.

It is found in the cytoplasm. The protein localises to the cytoskeleton. The protein resides in the cell junction. Its subcellular location is the focal adhesion. It localises to the cell cortex. Cytoskeletal protein involved in actin-membrane attachment at sites of cell adhesion to the extracellular matrix (focal adhesion). Recruits other proteins such as TRIM15 to focal adhesion. In Pongo abelii (Sumatran orangutan), this protein is Paxillin (PXN).